Here is a 62-residue protein sequence, read N- to C-terminus: Photosystem II reaction center protein Z (62 aa).

The next 2 membrane-spanning stretches (helical) occupy residues 8 to 28 (AVFALIATSSLLLISVPVVFA) and 41 to 61 (FSGTSLWIGLVFLVGILNSLI).

This sequence belongs to the PsbZ family. In terms of assembly, PSII is composed of 1 copy each of membrane proteins PsbA, PsbB, PsbC, PsbD, PsbE, PsbF, PsbH, PsbI, PsbJ, PsbK, PsbL, PsbM, PsbT, PsbY, PsbZ, Psb30/Ycf12, at least 3 peripheral proteins of the oxygen-evolving complex and a large number of cofactors. It forms dimeric complexes.

It localises to the plastid. Its subcellular location is the chloroplast thylakoid membrane. In terms of biological role, may control the interaction of photosystem II (PSII) cores with the light-harvesting antenna, regulates electron flow through the 2 photosystem reaction centers. PSII is a light-driven water plastoquinone oxidoreductase, using light energy to abstract electrons from H(2)O, generating a proton gradient subsequently used for ATP formation. The protein is Photosystem II reaction center protein Z of Oenothera elata subsp. hookeri (Hooker's evening primrose).